A 257-amino-acid polypeptide reads, in one-letter code: uncharacterized protein (257 aa).

A signal peptide spans 1 to 26 (MKKAFILSAAAAVGLFTFGGVQQASA). The tract at residues 80–135 (AKQSNVKVQDVQKTETAKPAQKTTEKAAADQNTASKAPATAEKTNTTTSAPSSVSA) is disordered. Positions 121 to 134 (EKTNTTTSAPSSVS) are enriched in polar residues. In terms of domain architecture, SCP spans 141-254 (VELTNAERQK…ESGSIWTQQF (114 aa)).

This is an uncharacterized protein from Bacillus subtilis (strain 168).